Consider the following 376-residue polypeptide: Heptahelical transmembrane protein ADIPOR1 (376 aa).

Residues 1–90 (MGEEAAMATM…LSLFSWHNET (90 aa)) are Cytoplasmic-facing. The interval 20–46 (PAAAPAPAKGGGSKKKRKQQKREEKRK) is disordered. The helical transmembrane segment at 91 to 111 (INIWTHLLGFVLFFGLTVLHL) threads the bilayer. Residues 112–179 (GQYFPQVADL…AAAAATTRWP (68 aa)) are Extracellular-facing. A helical membrane pass occupies residues 180–200 (FFVFLAGAMFCLLSSAACHLL). Over 201–216 (SCHSHRLNLFLIRLDY) the chain is Cytoplasmic. Residues 217–237 (TGIAVMIVVSFFPPIYYIFQC) form a helical membrane-spanning segment. Residues 238 to 240 (EPR) are Extracellular-facing. The helical transmembrane segment at 241–261 (WQVVYLSAITAAGVATVYALM) threads the bilayer. Residues 262-274 (SPRLSAARYRAHR) are Cytoplasmic-facing. Residues 275-295 (ALLFVAMGLSGVVPAAHAVAV) form a helical membrane-spanning segment. At 296–303 (NWHEPRRN) the chain is on the extracellular side. The chain crosses the membrane as a helical span at residues 304-324 (VTLAYEGAMAASYLAGTAFYL). At 325-344 (TRVPERWRPGMFDLCGHSHQ) the chain is on the cytoplasmic side. A helical transmembrane segment spans residues 345-365 (IFHALVIAGALAHYAAAIVFI). The Extracellular segment spans residues 366–376 (QARDEMGCPAP).

This sequence belongs to the ADIPOR family.

The protein resides in the membrane. In terms of biological role, may play a role in abiotic stress response. In Oryza sativa subsp. japonica (Rice), this protein is Heptahelical transmembrane protein ADIPOR1 (ADIPOR1).